A 339-amino-acid chain; its full sequence is Anthranilate phosphoribosyltransferase (339 aa).

5-phospho-alpha-D-ribose 1-diphosphate is bound by residues glycine 79, 82 to 83 (GD), threonine 87, 89 to 92 (NVST), 107 to 115 (KHGNRAVSS), and serine 119. Glycine 79 lines the anthranilate pocket. Serine 91 is a binding site for Mg(2+). Asparagine 110 is a binding site for anthranilate. Arginine 165 serves as a coordination point for anthranilate. 2 residues coordinate Mg(2+): aspartate 224 and glutamate 225.

The protein belongs to the anthranilate phosphoribosyltransferase family. Homodimer. Mg(2+) serves as cofactor.

It catalyses the reaction N-(5-phospho-beta-D-ribosyl)anthranilate + diphosphate = 5-phospho-alpha-D-ribose 1-diphosphate + anthranilate. The protein operates within amino-acid biosynthesis; L-tryptophan biosynthesis; L-tryptophan from chorismate: step 2/5. Catalyzes the transfer of the phosphoribosyl group of 5-phosphorylribose-1-pyrophosphate (PRPP) to anthranilate to yield N-(5'-phosphoribosyl)-anthranilate (PRA). The protein is Anthranilate phosphoribosyltransferase of Geobacillus stearothermophilus (Bacillus stearothermophilus).